Here is a 401-residue protein sequence, read N- to C-terminus: Decapping and exoribonuclease protein (401 aa).

Residues 1 to 27 are disordered; it reads MEGNKSMQREKIDRPMKRGPEQNSLSP. Basic and acidic residues predominate over residues 7-20; sequence MQREKIDRPMKRGP. Substrate is bound by residues arginine 69, glutamate 114, and 149 to 151; that span reads WRG. Residue glutamate 210 participates in Mg(2+) binding. Substrate-binding residues include cysteine 235 and glutamate 252. Mg(2+) is bound by residues glutamate 252, aspartate 254, glutamate 271, and leucine 272. Residues lysine 273 and glutamine 298 each coordinate substrate.

It belongs to the DXO/Dom3Z family. Mg(2+) is required as a cofactor.

The protein localises to the nucleus. The enzyme catalyses a 5'-end triphospho-ribonucleoside in mRNA + H2O = a 5'-end phospho-ribonucleoside in mRNA + diphosphate + H(+). It catalyses the reaction a 5'-end NAD(+)-phospho-ribonucleoside in mRNA + H2O = a 5'-end phospho-ribonucleoside in mRNA + NAD(+) + H(+). It carries out the reaction a 5'-end NAD(+)-phospho-ribonucleoside in snoRNA + H2O = a 5'-end phospho-ribonucleoside in snoRNA + NAD(+) + H(+). The catalysed reaction is a 5'-end (N(7)-methyl 5'-triphosphoguanosine)-ribonucleoside-ribonucleotide in mRNA + H2O = a (N(7)-methyl 5'-triphosphoguanosine)-nucleoside + a 5'-end phospho-ribonucleoside in mRNA + H(+). The enzyme catalyses a 5'-end FAD-phospho-ribonucleoside in mRNA + H2O = a 5'-end phospho-ribonucleoside in mRNA + FAD + H(+). It catalyses the reaction a 5'-end CoA-ribonucleoside in mRNA + H2O = 3'-dephospho-CoA + a 5'-end phospho-ribonucleoside in mRNA + H(+). In terms of biological role, decapping enzyme for NAD-capped RNAs: specifically hydrolyzes the nicotinamide adenine dinucleotide (NAD) cap from a subset of RNAs by removing the entire NAD moiety from the 5'-end of an NAD-capped RNA. The NAD-cap is present at the 5'-end of some RNAs and snoRNAs. In contrast to the canonical 5'-end N7 methylguanosine (m7G) cap, the NAD cap promotes mRNA decay. Also acts as a non-canonical decapping enzyme that removes the entire cap structure of m7G capped or incompletely capped RNAs and mediates their subsequent degradation. Specifically degrades pre-mRNAs with a defective 5'-end m7G cap and is part of a pre-mRNA capping quality control. Has decapping activity toward incomplete 5'-end m7G cap mRNAs such as unmethylated 5'-end-capped RNA (cap0), while it has no activity toward 2'-O-ribose methylated m7G cap (cap1). Also has 5'-3' exoribonuclease activities: The 5'-end monophosphate RNA is then degraded by the 5'-3' exoribonuclease activity, enabling this enzyme to decap and degrade incompletely capped mRNAs. Also possesses RNA 5'-pyrophosphohydrolase activity by hydrolyzing the 5'-end triphosphate to release pyrophosphates. Exhibits decapping activity towards FAD-capped RNAs. Exhibits decapping activity towards dpCoA-capped RNAs in vitro. The chain is Decapping and exoribonuclease protein from Xenopus laevis (African clawed frog).